Consider the following 66-residue polypeptide: Large ribosomal subunit protein bL35 (66 aa).

2 stretches are compositionally biased toward basic residues: residues 1 to 15 (MPKL…KRFK) and 28 to 45 (TKRH…RTRR). Residues 1–49 (MPKLKTKSSAKKRFKVTASGRVMSAQSTKRHGMTKRSKRSLRTRRGIAQ) are disordered.

The protein belongs to the bacterial ribosomal protein bL35 family.

This Anaplasma marginale (strain Florida) protein is Large ribosomal subunit protein bL35.